Reading from the N-terminus, the 132-residue chain is Large ribosomal subunit protein bL17 (132 aa).

Belongs to the bacterial ribosomal protein bL17 family. As to quaternary structure, part of the 50S ribosomal subunit. Contacts protein L32.

This is Large ribosomal subunit protein bL17 from Cellvibrio japonicus (strain Ueda107) (Pseudomonas fluorescens subsp. cellulosa).